Here is a 1113-residue protein sequence, read N- to C-terminus: MLGSKSIIAVVAIASAIVTGVVVIVVVVTLSVVLTRSSVKDTNSIYVPDVITNDPQMTNEMDTLEVISSSKFSGTKPKEWTMKYTKYPYWRCGLTFTNEEKQNIVNENKEYMNSLLQLINNGSLGRMPEKYGGDKQFEANGVNWEADRLEVRYGLFGRVFGQRAVAWAFPGEIVTIKFPKGMSYKGIQVGIGKCNHNPSDQWLNVNNWSNDRMPIDSIGFDLGLNTTQPYIINDTFKIGSPFGGMIYLRSDTTFTNSFYVTFSNVGRAPIINYNITTNEEWNSVLRNAPGNVAEIRTPGNRLVLTSRNIRSLEDAQYISDFWLKAISISNYAVTLENIPITLNFDQRVDAGAAVAYVGRWFTQNPSDWAAACVGKDGLINYGNWGPLHEMNHHMQGTYLKGGNWGISNPGEETNNVMTSINYILYTNIAGHRNQGLSGWNYVSDGYSTIYKILKGENDQPHLRSYVNMAHAFGTDTLIALVKSYYGLWYENNFESKYSIKRDSTSAFCLLAALVTKRDTRYLCSLFKYDIQSNVSEAIKNMNYPTYYPFFNLYAMSYNGNYYGRPYKIPYGRTRLNFTATTAIDPKATSVSYTIKSGLTKGKLERVEDNVYDYTPFFGIEENDTFVLNIDCVVNGEKVHIEQEGTFELDPHQVEYEVYKDVQTRDMAQALNIIQNKTANDTGRASFFGIGTYNDGSMQSMLVEKGKLIVPKSGYYTLFMKADDLGRLLLNITGEYEQLLDVKTYLGGYSKTLNGSYATVKLEKDVGYPFILYNLNTGGQGFIRIGYCYHGTEESSVDVSKCSVSDIGSSMVLNEKVKTGAKEPEFQIPPIKYSRPTRFLTNAYRTIPKCLNGDDACSIKCLSLPLKHDDSSKCSNMFDDNYSTMYHSRWTGQGTTFPVNYTFEFSENVTFNNLYVHHRRPEDSWGYFEMFVKSPETGEMELLEKYKHPKSTTTELNFQKLVTTDRVQFIVYNNSNGGNYVNVVELSFNIKETFKNYTNSFGPKIKSTGFKKVTTPGASGGYLAVNEKEGEGSLCFKAKVTKFGLYGYRKTTSGKFRVTIDSQPGEVTSQSYFSDSERTLFYAHTFDETEANKVHNICMEVVEGTVNLDIIGSS.

The chain crosses the membrane as a helical span at residues 7-27 (IIAVVAIASAIVTGVVVIVVV). N121, N207, N225, N233, N274, N533, N576, N622, N675, N679, N730, N753, N880, N899, N907, N972, and N995 each carry an N-linked (GlcNAc...) asparagine glycan. In terms of domain architecture, Peptidase M60 spans 159 to 473 (VFGQRAVAWA…SYVNMAHAFG (315 aa)). Residues 648–800 (LDPHQVEYEV…TEESSVDVSK (153 aa)) enclose the PA14 domain.

It localises to the membrane. The protein is Antigenic protein P1 of Entamoeba histolytica (strain ATCC 30459 / HM-1:IMSS / ABRM).